The sequence spans 141 residues: Putative pre-16S rRNA nuclease (141 aa).

Belongs to the YqgF nuclease family.

It is found in the cytoplasm. Its function is as follows. Could be a nuclease involved in processing of the 5'-end of pre-16S rRNA. This chain is Putative pre-16S rRNA nuclease, found in Aliivibrio salmonicida (strain LFI1238) (Vibrio salmonicida (strain LFI1238)).